Consider the following 510-residue polypeptide: Probable cytosol aminopeptidase (510 aa).

The Mn(2+) site is built by Lys282 and Asp287. Lys294 is an active-site residue. Asp305, Asp364, and Glu366 together coordinate Mn(2+). The active site involves Arg368.

This sequence belongs to the peptidase M17 family. Requires Mn(2+) as cofactor.

The protein localises to the cytoplasm. It carries out the reaction Release of an N-terminal amino acid, Xaa-|-Yaa-, in which Xaa is preferably Leu, but may be other amino acids including Pro although not Arg or Lys, and Yaa may be Pro. Amino acid amides and methyl esters are also readily hydrolyzed, but rates on arylamides are exceedingly low.. The catalysed reaction is Release of an N-terminal amino acid, preferentially leucine, but not glutamic or aspartic acids.. In terms of biological role, presumably involved in the processing and regular turnover of intracellular proteins. Catalyzes the removal of unsubstituted N-terminal amino acids from various peptides. The sequence is that of Probable cytosol aminopeptidase from Cupriavidus metallidurans (strain ATCC 43123 / DSM 2839 / NBRC 102507 / CH34) (Ralstonia metallidurans).